The primary structure comprises 209 residues: Potassium-transporting ATPase KdpC subunit (209 aa).

A helical membrane pass occupies residues 10-30; the sequence is VISLVFLFVLGFLFPTVTSLI.

Belongs to the KdpC family. The system is composed of three essential subunits: KdpA, KdpB and KdpC.

It is found in the cell membrane. Functionally, part of the high-affinity ATP-driven potassium transport (or Kdp) system, which catalyzes the hydrolysis of ATP coupled with the electrogenic transport of potassium into the cytoplasm. This subunit acts as a catalytic chaperone that increases the ATP-binding affinity of the ATP-hydrolyzing subunit KdpB by the formation of a transient KdpB/KdpC/ATP ternary complex. This chain is Potassium-transporting ATPase KdpC subunit, found in Thermoplasma volcanium (strain ATCC 51530 / DSM 4299 / JCM 9571 / NBRC 15438 / GSS1).